The following is a 1133-amino-acid chain: Lysylphosphatidylglycerol biosynthesis bifunctional protein LysX (1133 aa).

A phosphatidylglycerol lysyltransferase region spans residues 1–626 (MTTVDASPGI…LLHHDGSTPD (626 aa)). Helical transmembrane passes span 43 to 63 (VPAAAGWTVGVIATLSLIASV), 82 to 102 (LFNFPDTSIAWSFVLALLAAA), 109 to 129 (IAWLLLLGNMVLAAVLNAVDM), 140 to 160 (FGENLGFAVHVVAILLLVLSY), 177 to 197 (AVLVAGDVIGILLSLGLVELF), 233 to 253 (LNAIFGLFGALALIMATIVLF), and 575 to 595 (LIPRVGVASVIAEGFLVLPFS). The segment at 627–1133 (VSGLQTADVD…TLPFPLAKPH (507 aa)) is lysine--tRNA ligase. Mg(2+) contacts are provided by Asp1045 and Glu1052.

It in the N-terminal section; belongs to the LPG synthetase family. This sequence in the C-terminal section; belongs to the class-II aminoacyl-tRNA synthetase family. The cofactor is Mg(2+).

It localises to the cell membrane. It catalyses the reaction tRNA(Lys) + L-lysine + ATP = L-lysyl-tRNA(Lys) + AMP + diphosphate. The catalysed reaction is L-lysyl-tRNA(Lys) + a 1,2-diacyl-sn-glycero-3-phospho-(1'-sn-glycerol) = a 1,2-diacyl-sn-glycero-3-phospho-1'-(3'-O-L-lysyl)-sn-glycerol + tRNA(Lys). In terms of biological role, catalyzes the production of L-lysyl-tRNA(Lys)transfer and the transfer of a lysyl group from L-lysyl-tRNA(Lys) to membrane-bound phosphatidylglycerol (PG), which produces lysylphosphatidylglycerol (LPG), one of the components of the bacterial membrane with a positive net charge. LPG synthesis contributes to the resistance to cationic antimicrobial peptides (CAMPs) and likely protects M.tuberculosis against the CAMPs produced by competiting microorganisms (bacteriocins). In fact, the modification of anionic phosphatidylglycerol with positively charged L-lysine results in repulsion of the peptides. In Mycobacterium leprae (strain Br4923), this protein is Lysylphosphatidylglycerol biosynthesis bifunctional protein LysX (lysX).